Consider the following 847-residue polypeptide: MNKTTEYIDALLLSEREKAALPKTDIRAVHQALDAEHRTYSREDDSPQGSVKARLEHAWPDSLAKGQLIKDDEGRDQLQAMPKATRSSMFPDPWRTNPVGRFWDRLRGRDVTPRYVSRLTKEEQASEQKWRTVGTIRRYILLILTLAQTVVATWYMKTILPYQGWALINPMDMVGQDIWVSFMQLLPYMLQTGILILFAVLFCWVSAGFWTALMGFLQLLIGRDKYSISASTVGDEPLNPEHRTALIMPICNEDVSRVFAGLRATWESVKATGNAAHFDVYILSDSYNPDICVAEQKAWMELIAEVQGEGQIFYRRRRRRMKRKSGNIDDFCRRWGNQYSYMVVLDADSVMSGECLSGLVRLMEANPNAGIIQSSPKASGMDTLYARCQQFATRVYGPLFTAGLHFWQLGESHYWGHNAIIRVKPFIEHCALAPLPGEGSFAGSILSHDFVEAALMRRAGWGVWIAYDLPGSYEELPPNLLDELKRDRRWCHGNLMNFRLFLVKGMHPVHRAVFLTGVMSYLSAPLWFMFLALSTALQVVHALTEPQYFLQPRQLFPVWPQWRPELAIALFASTMVLLFLPKLLSIMLIWCKGTKEYGGFWRVTLSLLLEVLFSVLLAPVRMLFHTVFVVSAFLGWEVVWNSPQRDDDSTPWGEAFMRHGSQLLLGLVWAVGMAWLDLRFLFWLAPIVFSLILSPFVSVISSRSTVGLRTKRWKLFLIPEEYSPPQVLVDTDKYLEMNRRRILDDGFMHAVFNPSLNALATAMATARHRASKVLEIARDRHVEQALNETPEKLNRDRRLVLLSDPVTMARLHYRVWNAPERYSSWVNHYQSLVLNPQALQGRTSSAR.

Residues 1–138 (MNKTTEYIDA…KWRTVGTIRR (138 aa)) lie on the Cytoplasmic side of the membrane. Residues 139–156 (YILLILTLAQTVVATWYM) form a helical membrane-spanning segment. The Periplasmic portion of the chain corresponds to 157–193 (KTILPYQGWALINPMDMVGQDIWVSFMQLLPYMLQTG). The chain crosses the membrane as a helical span at residues 194–216 (ILILFAVLFCWVSAGFWTALMGF). Over 217–511 (LQLLIGRDKY…LVKGMHPVHR (295 aa)) the chain is Cytoplasmic. Residues 512-534 (AVFLTGVMSYLSAPLWFMFLALS) traverse the membrane as a helical segment. Residues 535–567 (TALQVVHALTEPQYFLQPRQLFPVWPQWRPELA) are Periplasmic-facing. The helical transmembrane segment at 568-590 (IALFASTMVLLFLPKLLSIMLIW) threads the bilayer. Over 591–602 (CKGTKEYGGFWR) the chain is Cytoplasmic. A helical membrane pass occupies residues 603–625 (VTLSLLLEVLFSVLLAPVRMLFH). The Periplasmic segment spans residues 626 to 679 (TVFVVSAFLGWEVVWNSPQRDDDSTPWGEAFMRHGSQLLLGLVWAVGMAWLDLR). A helical membrane pass occupies residues 680-702 (FLFWLAPIVFSLILSPFVSVISS). Residues 703-847 (RSTVGLRTKR…ALQGRTSSAR (145 aa)) are Cytoplasmic-facing.

This sequence belongs to the glycosyltransferase 2 family. OpgH subfamily.

The protein localises to the cell inner membrane. The protein operates within glycan metabolism; osmoregulated periplasmic glucan (OPG) biosynthesis. Functionally, involved in the biosynthesis of osmoregulated periplasmic glucans (OPGs). This chain is Glucans biosynthesis glucosyltransferase H, found in Salmonella typhimurium (strain LT2 / SGSC1412 / ATCC 700720).